Here is a 220-residue protein sequence, read N- to C-terminus: ATP synthase subunit beta, chloroplastic (220 aa).

This sequence belongs to the ATPase alpha/beta chains family. In terms of assembly, F-type ATPases have 2 components, CF(1) - the catalytic core - and CF(0) - the membrane proton channel. CF(1) has five subunits: alpha(3), beta(3), gamma(1), delta(1), epsilon(1). CF(0) has four main subunits: a(1), b(1), b'(1) and c(9-12).

Its subcellular location is the plastid. It is found in the chloroplast thylakoid membrane. It carries out the reaction ATP + H2O + 4 H(+)(in) = ADP + phosphate + 5 H(+)(out). Its function is as follows. Produces ATP from ADP in the presence of a proton gradient across the membrane. The catalytic sites are hosted primarily by the beta subunits. The chain is ATP synthase subunit beta, chloroplastic (atpB) from Osmundastrum cinnamomeum (Cinnamon fern).